A 570-amino-acid polypeptide reads, in one-letter code: Periplasmic trehalase (570 aa).

An N-terminal signal peptide occupies residues M1–A34. Substrate is bound by residues R159, W166–D167, N203, R212–Q214, R284–E286, and G317. Residues D319 and E503 each act as proton donor/acceptor in the active site. A substrate-binding site is contributed by E518. The interval K544 to Q570 is disordered. Residues P554–Q570 show a composition bias toward low complexity.

The protein belongs to the glycosyl hydrolase 37 family. Monomer.

The protein resides in the periplasm. The enzyme catalyses alpha,alpha-trehalose + H2O = alpha-D-glucose + beta-D-glucose. Its function is as follows. Provides the cells with the ability to utilize trehalose at high osmolarity by splitting it into glucose molecules that can subsequently be taken up by the phosphotransferase-mediated uptake system. This Salmonella schwarzengrund (strain CVM19633) protein is Periplasmic trehalase.